The sequence spans 490 residues: Dual specificity protein kinase CLK3 (490 aa).

The segment at 1–138 (MHHCKRYRSP…SKRSSRSVED (138 aa)) is disordered. A Phosphotyrosine modification is found at Tyr7. Residues Ser9, Ser49, Ser51, Ser67, Ser76, and Ser78 each carry the phosphoserine modification. Composition is skewed to basic and acidic residues over residues 26–56 (YSREHEGRLRYPSRREPPPRRSRSRSHDRIP) and 63–76 (EHRDSDTYRCEERS). A compositionally biased stretch (basic residues) spans 88–116 (RSRHRRRSRERGPYRTRKHAHHCHKRRTR). The segment covering 117-130 (SCSSASSRSQQSSK) has biased composition (low complexity). The residue at position 135 (Ser135) is a Phosphoserine. A Protein kinase domain is found at 156–472 (YEIVGNLGEG…LAEALLHPFF (317 aa)). Residues 162-170 (LGEGTFGKV) and Lys186 each bind ATP. The Proton acceptor role is filled by Asp283.

It belongs to the protein kinase superfamily. CMGC Ser/Thr protein kinase family. Lammer subfamily. In terms of processing, autophosphorylates on all three types of residues.

Its subcellular location is the nucleus. It is found in the cytoplasm. The protein localises to the cytoplasmic vesicle. It localises to the secretory vesicle. The protein resides in the acrosome. It carries out the reaction L-seryl-[protein] + ATP = O-phospho-L-seryl-[protein] + ADP + H(+). The enzyme catalyses L-threonyl-[protein] + ATP = O-phospho-L-threonyl-[protein] + ADP + H(+). It catalyses the reaction L-tyrosyl-[protein] + ATP = O-phospho-L-tyrosyl-[protein] + ADP + H(+). With respect to regulation, leucettine L41 inhibits its kinase activity and affects the regulation of alternative splicing mediated by phosphorylation of SR proteins. Dual specificity kinase acting on both serine/threonine and tyrosine-containing substrates. Phosphorylates serine- and arginine-rich (SR) proteins of the spliceosomal complex. May be a constituent of a network of regulatory mechanisms that enable SR proteins to control RNA splicing and can cause redistribution of SR proteins from speckles to a diffuse nucleoplasmic distribution. Phosphorylates SRSF1 and SRSF3. Regulates the alternative splicing of tissue factor (F3) pre-mRNA in endothelial cells. This is Dual specificity protein kinase CLK3 (Clk3) from Rattus norvegicus (Rat).